Consider the following 404-residue polypeptide: 4-hydroxy-3-methylbut-2-enyl diphosphate reductase (404 aa).

Cys66 lines the [4Fe-4S] cluster pocket. His96 contacts (2E)-4-hydroxy-3-methylbut-2-enyl diphosphate. His96 provides a ligand contact to dimethylallyl diphosphate. His96 is an isopentenyl diphosphate binding site. Cys157 contributes to the [4Fe-4S] cluster binding site. His185 is a binding site for (2E)-4-hydroxy-3-methylbut-2-enyl diphosphate. His185 serves as a coordination point for dimethylallyl diphosphate. An isopentenyl diphosphate-binding site is contributed by His185. The active-site Proton donor is the Glu187. A (2E)-4-hydroxy-3-methylbut-2-enyl diphosphate-binding site is contributed by Thr250. Cys288 is a [4Fe-4S] cluster binding site. (2E)-4-hydroxy-3-methylbut-2-enyl diphosphate is bound by residues Ser317, Ser318, Asn319, and Ser380. Dimethylallyl diphosphate contacts are provided by Ser317, Ser318, Asn319, and Ser380. Ser317, Ser318, Asn319, and Ser380 together coordinate isopentenyl diphosphate.

It belongs to the IspH family. The cofactor is [4Fe-4S] cluster.

It carries out the reaction isopentenyl diphosphate + 2 oxidized [2Fe-2S]-[ferredoxin] + H2O = (2E)-4-hydroxy-3-methylbut-2-enyl diphosphate + 2 reduced [2Fe-2S]-[ferredoxin] + 2 H(+). The enzyme catalyses dimethylallyl diphosphate + 2 oxidized [2Fe-2S]-[ferredoxin] + H2O = (2E)-4-hydroxy-3-methylbut-2-enyl diphosphate + 2 reduced [2Fe-2S]-[ferredoxin] + 2 H(+). It participates in isoprenoid biosynthesis; dimethylallyl diphosphate biosynthesis; dimethylallyl diphosphate from (2E)-4-hydroxy-3-methylbutenyl diphosphate: step 1/1. Its pathway is isoprenoid biosynthesis; isopentenyl diphosphate biosynthesis via DXP pathway; isopentenyl diphosphate from 1-deoxy-D-xylulose 5-phosphate: step 6/6. Functionally, catalyzes the conversion of 1-hydroxy-2-methyl-2-(E)-butenyl 4-diphosphate (HMBPP) into a mixture of isopentenyl diphosphate (IPP) and dimethylallyl diphosphate (DMAPP). Acts in the terminal step of the DOXP/MEP pathway for isoprenoid precursor biosynthesis. The sequence is that of 4-hydroxy-3-methylbut-2-enyl diphosphate reductase from Prochlorococcus marinus (strain MIT 9211).